We begin with the raw amino-acid sequence, 380 residues long: Cytochrome b (380 aa).

Transmembrane regions (helical) follow at residues Phe-34 to Met-54, Trp-78 to Ile-99, Trp-114 to Leu-134, and Phe-179 to Met-199. Heme b-binding residues include His-84 and His-98. Residues His-183 and His-197 each contribute to the heme b site. Residue His-202 coordinates a ubiquinone. The next 4 membrane-spanning stretches (helical) occupy residues Leu-227–Ser-247, Leu-289–His-309, Leu-321–Ser-341, and Phe-348–Pro-368.

This sequence belongs to the cytochrome b family. In terms of assembly, the cytochrome bc1 complex contains 11 subunits: 3 respiratory subunits (MT-CYB, CYC1 and UQCRFS1), 2 core proteins (UQCRC1 and UQCRC2) and 6 low-molecular weight proteins (UQCRH/QCR6, UQCRB/QCR7, UQCRQ/QCR8, UQCR10/QCR9, UQCR11/QCR10 and a cleavage product of UQCRFS1). This cytochrome bc1 complex then forms a dimer. Requires heme b as cofactor.

Its subcellular location is the mitochondrion inner membrane. Component of the ubiquinol-cytochrome c reductase complex (complex III or cytochrome b-c1 complex) that is part of the mitochondrial respiratory chain. The b-c1 complex mediates electron transfer from ubiquinol to cytochrome c. Contributes to the generation of a proton gradient across the mitochondrial membrane that is then used for ATP synthesis. The sequence is that of Cytochrome b (MT-CYB) from Syrmaticus reevesii (Reeves's pheasant).